Reading from the N-terminus, the 447-residue chain is MTISETSSNLKNTPPQWGRKFIQTIADLRLAIILLLLIAIFSISGTVIEQGQSLSFYQANYPEKPALFGFLTWKVLLLLGLNHVYSTWWYLSLLILFGSSLTACTFRRQLPALKAARNWQFYQQSRQFQKLALSAELETGSLESLTPLLEKKGYKVFLENNSLYARKGLIGKIGPIIVHAAMLIILAGAIWGALTGFFAQEMVASGDSFQVKNIIEAGPLSKNSLPKDWGIKVNRFWIDYSPKGDIEQFYSDLSVIDNQGQEIDRKTIQVNQPLHHKGVTFYQTSWGIAGVKVQVNNSPILQLPMASLDTKGNGQIWGTWIPTKTDLSEGVSLLTRDLQGTVIVYDAQGDLTSAVREGMTIPINGVNLKIVELVGSTGLQIKADPGVPIVYLGFALLMMGVVMSYFSHSQIWALQSGDRFYIGGKTNRAQVSFEREIIDTIERLKLK.

The next 3 helical transmembrane spans lie at 28–48 (LRLA…GTVI), 87–107 (TWWY…CTFR), and 173–193 (IGPI…IWGA).

Belongs to the Ccs1/CcsB family. As to quaternary structure, may interact with CcsA.

It is found in the cellular thylakoid membrane. Functionally, required during biogenesis of c-type cytochromes (cytochrome c6 and cytochrome f) at the step of heme attachment. This is Cytochrome c biogenesis protein CcsB from Microcystis aeruginosa (strain NIES-843 / IAM M-2473).